A 536-amino-acid polypeptide reads, in one-letter code: Zinc finger CCCH domain-containing protein 18 (536 aa).

The C3H1-type zinc-finger motif lies at 156 to 183; that stretch reads EFPVKICHYFNKGFCKHGNNCRYFHGQI. Positions 211-294 constitute an HTH OST-type domain; it reads SLEKLEGEII…HGQHSVILAE (84 aa). An RRM domain is found at 317-392; it reads RQIYLTFPAE…ARVLVKPYRE (76 aa).

Functionally, possesses ribonuclease activity in vitro. The polypeptide is Zinc finger CCCH domain-containing protein 18 (Arabidopsis thaliana (Mouse-ear cress)).